The primary structure comprises 769 residues: 4-hydroxybenzoyl-CoA reductase subunit alpha (769 aa).

Residues Q214, 244–245 (GF), 522–526 (SSRVT), 650–655 (VGKALN), and 722–725 (KEAS) contribute to the Mo-molybdopterin cytosine dinucleotide site.

Belongs to the xanthine dehydrogenase family. In terms of assembly, heterohexamer of two alpha, two beta and two gamma subunits. It depends on Mo-molybdopterin cytosine dinucleotide as a cofactor. The N-terminus is blocked.

It carries out the reaction oxidized 2[4Fe-4S]-[ferredoxin] + benzoyl-CoA + H2O = 4-hydroxybenzoyl-CoA + reduced 2[4Fe-4S]-[ferredoxin] + 2 H(+). Its activity is regulated as follows. Inactivated by low concentrations of cyanide in vitro. Component of a complex that catalyzes the reductive dehydroxylation of 4-hydroxybenzoyl-CoA to benzoyl-CoA. Reaction is not reversible. Is a key enzyme in the anaerobic degradation of phenolic compounds. This is 4-hydroxybenzoyl-CoA reductase subunit alpha (hcrA) from Thauera aromatica.